The chain runs to 284 residues: D-tagatose-1,6-bisphosphate aldolase subunit GatY (284 aa).

Catalysis depends on Asp-82, which acts as the Proton donor. His-83 and His-180 together coordinate Zn(2+). Residue Gly-181 participates in dihydroxyacetone phosphate binding. A Zn(2+)-binding site is contributed by His-208. Dihydroxyacetone phosphate is bound by residues 209–211 (GAS) and 230–233 (NVAT).

The protein belongs to the class II fructose-bisphosphate aldolase family. TagBP aldolase GatY subfamily. In terms of assembly, forms a complex with GatZ. The cofactor is Zn(2+).

The enzyme catalyses D-tagatofuranose 1,6-bisphosphate = D-glyceraldehyde 3-phosphate + dihydroxyacetone phosphate. It functions in the pathway carbohydrate metabolism; D-tagatose 6-phosphate degradation; D-glyceraldehyde 3-phosphate and glycerone phosphate from D-tagatose 6-phosphate: step 2/2. Catalytic subunit of the tagatose-1,6-bisphosphate aldolase GatYZ, which catalyzes the reversible aldol condensation of dihydroxyacetone phosphate (DHAP or glycerone-phosphate) with glyceraldehyde 3-phosphate (G3P) to produce tagatose 1,6-bisphosphate (TBP). Requires GatZ subunit for full activity and stability. Is involved in the catabolism of galactitol. This is D-tagatose-1,6-bisphosphate aldolase subunit GatY from Salmonella enteritidis PT4 (strain P125109).